A 106-amino-acid polypeptide reads, in one-letter code: uncharacterized protein (106 aa).

Positions 1 to 31 are cleaved as a signal peptide; that stretch reads MNNERLMLKGIFLGAAAGAALSLLHKPTRQA. A coiled-coil region spans residues 57–89; it reads VITKVDEAKKLARTLSKEVDFVNQQVKELKKTT.

This is an uncharacterized protein from Bacillus subtilis (strain 168).